Consider the following 314-residue polypeptide: Cytochrome f (314 aa).

The N-terminal stretch at 1 to 30 (MATNKFFKSLLFALTIAINSFGFCIQDAVA) is a signal peptide. Heme is bound by residues Tyr31, Cys51, Cys54, and His55. A helical transmembrane segment spans residues 280–300 (IYGYLAFCFSVLITQIMLVLK).

Belongs to the cytochrome f family. In terms of assembly, the 4 large subunits of the cytochrome b6-f complex are cytochrome b6, subunit IV (17 kDa polypeptide, petD), cytochrome f and the Rieske protein, while the 4 small subunits are PetG, PetL, PetM and PetN. The complex functions as a dimer. It depends on heme as a cofactor.

It is found in the plastid. Its subcellular location is the chloroplast thylakoid membrane. Functionally, component of the cytochrome b6-f complex, which mediates electron transfer between photosystem II (PSII) and photosystem I (PSI), cyclic electron flow around PSI, and state transitions. This is Cytochrome f from Phaeodactylum tricornutum (strain CCAP 1055/1).